The chain runs to 382 residues: Small ribosomal subunit protein bS1 homolog (382 aa).

S1 motif domains follow at residues 18-85, 103-168, 189-257, and 274-343; these read GDVV…LSKR, GHVF…LSHK, GDVV…LSIK, and GDIR…LSIK. S244 is modified (phosphoserine).

Belongs to the bacterial ribosomal protein bS1 family.

The chain is Small ribosomal subunit protein bS1 homolog from Bacillus cereus (strain ATCC 10987 / NRS 248).